Consider the following 476-residue polypeptide: Lactate utilization protein B (476 aa).

2 consecutive 4Fe-4S ferredoxin-type domains span residues 304 to 334 and 353 to 382; these read GTEF…GHSY and YDDY…LHEL. Residues cysteine 313, cysteine 316, cysteine 319, cysteine 323, cysteine 366, cysteine 369, and cysteine 373 each coordinate [4Fe-4S] cluster.

The protein belongs to the LutB/YkgF family.

Is involved in L-lactate degradation and allows cells to grow with lactate as the sole carbon source. Has probably a role as an electron transporter during oxidation of L-lactate. The sequence is that of Lactate utilization protein B from Geobacillus thermodenitrificans (strain NG80-2).